The sequence spans 677 residues: Protein windpipe (677 aa).

A signal peptide spans 1-20 (MERVHLTAWLALFLIVVANA). The Extracellular segment spans residues 21–451 (TPTPARTPTG…IGKPKDDSSA (431 aa)). N-linked (GlcNAc...) asparagine glycans are attached at residues Asn53 and Asn80. LRR repeat units lie at residues 91 to 116 (LPEL…GLKR), 118 to 133 (NLKH…RKLP), 134 to 156 (QHLQ…LTHM), and 158 to 183 (QLHQ…NWLV). Asn145 and Asn170 each carry an N-linked (GlcNAc...) asparagine glycan. The 33-residue stretch at 184-216 (ERIVYMEHPVVCSYPLEFRGRSWLQLKQDEICK) folds into the LRRCT domain. 3 disordered regions span residues 264–285 (AKKV…SGDL), 298–317 (TVAE…ASPS), and 325–385 (KDED…TVFS). Residues 347–372 (SKVKITSEDDIDSDGKPEESDVRPLE) are compositionally biased toward basic and acidic residues. Polar residues predominate over residues 374-385 (PENSENPDTVFS). Residues 452-472 (IYYLLAVIGLIVVGLVLFVAI) traverse the membrane as a helical segment. The Cytoplasmic segment spans residues 473–677 (KRCKYDSNAA…EPTHQVINGH (205 aa)). Disordered regions lie at residues 502-523 (LGKP…LIGE) and 539-677 (NGEA…INGH). Low complexity predominate over residues 595 to 607 (AQQQQLAEQNNNE).

In terms of assembly, interacts with dome; the interaction promotes internalization of dome and its subsequent lysosomal degradation. As to expression, in adult intestine, expressed in both small progenitor cells and large nuclei enterocytes (at protein level). During embryogenesis, restricted to the developing trachea.

The protein localises to the cell membrane. Its function is as follows. Plays a role in negative regulation of the JAK/STAT pathway by binding to the receptor dome and promoting its internalization for subsequent lysosomal degradation, thereby reducing JAK/STAT signaling. This Drosophila melanogaster (Fruit fly) protein is Protein windpipe.